The primary structure comprises 413 residues: MLEKETINFEKTIIVGIVTQNQSEEKLKEYLDELEFLTFTAGGEVVKRFSQKMERPNPKTFLGTGKIEEINLYVLENGISTIVFDDELTPSQQKNISKIIDCKILDRTHLILDIFAQRAETSYARTQVELAQCIYLLPRLSGMWTHLERQKGGIGMRGPGETEIETDRRIVRDRIALLKEKIKIIDKQQATQRGNRGAMVRVALVGYTNVGKSTLMNAVGKSDVFVENKLFATLDTTVRKVVIKNLPFLLSDTVGFIRKLPTQLVDSFKSTLDEVREADLLLHVVDISHQDFEDHIDAVNKILLDIKSADKPTIMVFNKIDAYKHLTIDADDLMTERTSKHYTLQEWKNTWMNKVGEQNALFISATNKENFEEFRKKVYETVREIHITRFPYNKFLYPDYEDAIDKEEEQDQD.

The Hflx-type G domain maps to 200 to 386; it reads VRVALVGYTN…KVYETVREIH (187 aa). GTP contacts are provided by residues 206-213, 231-235, 252-255, 318-321, and 364-366; these read GYTNVGKS, FATLD, DTVG, NKID, and SAT. Mg(2+)-binding residues include Ser-213 and Thr-233.

The protein belongs to the TRAFAC class OBG-HflX-like GTPase superfamily. HflX GTPase family. Monomer. Associates with the 50S ribosomal subunit. It depends on Mg(2+) as a cofactor.

The protein resides in the cytoplasm. In terms of biological role, GTPase that associates with the 50S ribosomal subunit and may have a role during protein synthesis or ribosome biogenesis. This chain is GTPase HflX, found in Flavobacterium psychrophilum (strain ATCC 49511 / DSM 21280 / CIP 103535 / JIP02/86).